The following is a 421-amino-acid chain: Non-homologous end-joining factor LIF1 (421 aa).

The segment at 1–196 (MSQLTEFISC…VEQLAREREL (196 aa)) is interaction with NEJ1. The disordered stretch occupies residues 365–421 (GIQISAGRSDEDYGDISGSESETDASAGEKKSSNHSEQSGNDREPCLQTESETDIET). The segment covering 391–409 (AGEKKSSNHSEQSGNDREP) has biased composition (basic and acidic residues).

Belongs to the XRCC4-XLF family. XLF subfamily. Interacts with DNL4 (via BRCT domain). Interacts (via N-terminus) with NEJ1 (via C-terminus); the interaction is direct. The DNL4-LIF1 complex interacts with POL4.

The protein localises to the cytoplasm. It is found in the nucleus. Involved in non-homologous repair of DNA double-strand breaks. Stabilizes DNL4. The sequence is that of Non-homologous end-joining factor LIF1 (LIF1) from Saccharomyces cerevisiae (strain ATCC 204508 / S288c) (Baker's yeast).